The sequence spans 546 residues: Aladin (546 aa).

An N-acetylcysteine modification is found at cysteine 2. Phosphoserine is present on serine 33. 7 WD repeats span residues 142 to 180 (EFAQ…VYNA), 183 to 222 (TIVP…IWTL), 234 to 274 (GCAQ…VWDV), 280 to 316 (VPLP…VWEA), 324 to 380 (WPTL…IVAD), 386 to 433 (IQTP…LFRT), and 442 to 482 (LPCG…IAHI). 4 positions are modified to phosphoserine: serine 495, serine 511, serine 522, and serine 525. A disordered region spans residues 500 to 546 (RAQEPPAGGGGSIHDLPLFTETSPTSAPWDPLPGPPPVLPHSPHSHL). The segment covering 529–539 (DPLPGPPPVLP) has biased composition (pro residues). Serine 541 carries the phosphoserine modification. Residues 544-546 (SHL) carry the Microbody targeting signal motif.

Interacts with NDC1, the interaction is required for nuclear pore localization. Interacts with the inactive form aurora kinase AURKA. Interacts with PGRMC2. As to expression, widely expressed. Particularly abundant in cerebellum, corpus callosum, adrenal gland, pituitary gland, gastrointestinal structures and fetal lung.

Its subcellular location is the nucleus. The protein localises to the nuclear pore complex. It localises to the cytoplasm. The protein resides in the cytoskeleton. It is found in the spindle pole. Its subcellular location is the nucleus envelope. In terms of biological role, plays a role in the normal development of the peripheral and central nervous system. Required for the correct localization of aurora kinase AURKA and the microtubule minus end-binding protein NUMA1 as well as a subset of AURKA targets which ensures proper spindle formation and timely chromosome alignment. This Homo sapiens (Human) protein is Aladin (AAAS).